The following is a 663-amino-acid chain: Cytoplasmic dynein 1 intermediate chain (663 aa).

Basic and acidic residues predominate over residues 17–37; it reads LREEKDRRRREKEIKDMEEAA. Disordered regions lie at residues 17–52 and 75–107; these read LREEKDRRRREKEIKDMEEAAGRIGGGAGIDKDQRK and SVNSMTSDNSNTQTPDASLQATVNGQSGGKKQP. Residues 75–85 show a composition bias toward low complexity; the sequence is SVNSMTSDNSN. A compositionally biased stretch (polar residues) spans 86 to 99; the sequence is TQTPDASLQATVNG. WD repeat units follow at residues 311 to 360, 364 to 404, 413 to 454, 463 to 503, 508 to 553, 556 to 596, and 602 to 641; these read SKNR…STPE, HCQS…RTPI, AHTH…QPQD, SKAI…SGVN, RHLG…PLYS, DNSD…EVPT, and AGAPALNRVSWTPSGLHVCIGDEAGKLYVYDVAENLAQPS.

The protein belongs to the dynein intermediate chain family. In terms of assembly, homodimer. The cytoplasmic dynein 1 complex consists of two catalytic heavy chains (HCs) and a number of non-catalytic subunits presented by intermediate chains (ICs), light intermediate chains (LICs) and light chains (LCs). As to expression, high levels of isoform 1b, isoform 1c, isoform 3a and isoform 4 accumulate in early egg chambers and at stage 9 become concentrated at the posterior of the oocyte. Isoform 5a and isoform 5b are highly expressed in adult head and to a lesser extent in adult torso. Isoform 1a, isoform 2a and isoform 2b are found in all tissues examined, including ovaries, midgut, torso and head.

It localises to the cytoplasm. It is found in the cytoskeleton. The protein localises to the lysosome membrane. Its subcellular location is the nucleus membrane. In terms of biological role, acts as one of several non-catalytic accessory components of the cytoplasmic dynein 1 complex that are thought to be involved in linking dynein to cargos and to adapter proteins that regulate dynein function. Cytoplasmic dynein 1 acts as a motor for the intracellular retrograde motility of vesicles and organelles along microtubules. The intermediate chains mediate the help dynein bind to dynactin 150 kDa component. This Drosophila melanogaster (Fruit fly) protein is Cytoplasmic dynein 1 intermediate chain (sw).